Here is a 295-residue protein sequence, read N- to C-terminus: Transmembrane protein 71 (295 aa).

A run of 2 helical transmembrane segments spans residues 229–249 (LLQEVFFQAILLAVCLIISAC) and 253–273 (FMGEILASVFTCSLMITVAYV).

This sequence belongs to the TMEM71 family.

The protein localises to the membrane. The chain is Transmembrane protein 71 (TMEM71) from Homo sapiens (Human).